The sequence spans 239 residues: Pyridoxal 5'-phosphate synthase subunit PdxS (239 aa).

Asp21 contacts D-ribose 5-phosphate. Catalysis depends on Lys78, which acts as the Schiff-base intermediate with D-ribose 5-phosphate. Gly150 is a binding site for D-ribose 5-phosphate. Arg162 lines the D-glyceraldehyde 3-phosphate pocket. D-ribose 5-phosphate-binding positions include Gly211 and 232-233; that span reads GS.

This sequence belongs to the PdxS/SNZ family. In the presence of PdxT, forms a dodecamer of heterodimers.

It catalyses the reaction aldehydo-D-ribose 5-phosphate + D-glyceraldehyde 3-phosphate + L-glutamine = pyridoxal 5'-phosphate + L-glutamate + phosphate + 3 H2O + H(+). Its pathway is cofactor biosynthesis; pyridoxal 5'-phosphate biosynthesis. In terms of biological role, catalyzes the formation of pyridoxal 5'-phosphate from ribose 5-phosphate (RBP), glyceraldehyde 3-phosphate (G3P) and ammonia. The ammonia is provided by the PdxT subunit. Can also use ribulose 5-phosphate and dihydroxyacetone phosphate as substrates, resulting from enzyme-catalyzed isomerization of RBP and G3P, respectively. This is Pyridoxal 5'-phosphate synthase subunit PdxS from Francisella tularensis.